We begin with the raw amino-acid sequence, 355 residues long: Methylxanthine N3-demethylase NdmB (355 aa).

Residues 19–131 enclose the Rieske domain; it reads WHPVCTLNEF…CEVKYDIVWV (113 aa). Residues C64, H66, C87, and H90 each coordinate [2Fe-2S] cluster.

The cofactor is [2Fe-2S] cluster.

The catalysed reaction is theobromine + NADH + O2 + H(+) = 7-methylxanthine + formaldehyde + NAD(+) + H2O. The enzyme catalyses theobromine + NADPH + O2 + H(+) = 7-methylxanthine + formaldehyde + NADP(+) + H2O. It catalyses the reaction 3-methylxanthine + NADH + O2 + H(+) = xanthine + formaldehyde + NAD(+) + H2O. It carries out the reaction 3-methylxanthine + NADPH + O2 + H(+) = xanthine + formaldehyde + NADP(+) + H2O. Involved in the caffeine degradation, which is the essential first step for assimilating the carbon and nitrogen in caffeine. Catalyzes the N3-demethylation of theobromine to produce 7-methylxanthine and formaldehyde. Also catalyzes the N3-demethylation of 3-methylxanthine, caffeine, and theophylline to xanthine, paraxanthine, and 1-methylxanthine, respectively. NADH is the preferred substrate. This is Methylxanthine N3-demethylase NdmB (ndmB) from Pseudomonas putida (Arthrobacter siderocapsulatus).